We begin with the raw amino-acid sequence, 115 residues long: Large ribosomal subunit protein uL18 (115 aa).

Belongs to the universal ribosomal protein uL18 family. In terms of assembly, part of the 50S ribosomal subunit; part of the 5S rRNA/L5/L18/L25 subcomplex. Contacts the 5S and 23S rRNAs.

In terms of biological role, this is one of the proteins that bind and probably mediate the attachment of the 5S RNA into the large ribosomal subunit, where it forms part of the central protuberance. This chain is Large ribosomal subunit protein uL18, found in Mycoplasma genitalium (strain ATCC 33530 / DSM 19775 / NCTC 10195 / G37) (Mycoplasmoides genitalium).